The primary structure comprises 508 residues: Maturase K (508 aa).

This sequence belongs to the intron maturase 2 family. MatK subfamily.

The protein localises to the plastid. Its subcellular location is the chloroplast. Its function is as follows. Usually encoded in the trnK tRNA gene intron. Probably assists in splicing its own and other chloroplast group II introns. The protein is Maturase K of Lupinus cosentinii (West Australian blue lupine).